The following is a 126-amino-acid chain: Glycine cleavage system H protein (126 aa).

The Lipoyl-binding domain occupies 24-105; the sequence is TLTVGITDHA…AYGVWLFKIK (82 aa). Lys65 is modified (N6-lipoyllysine).

Belongs to the GcvH family. The glycine cleavage system is composed of four proteins: P, T, L and H. (R)-lipoate is required as a cofactor.

The glycine cleavage system catalyzes the degradation of glycine. The H protein shuttles the methylamine group of glycine from the P protein to the T protein. The polypeptide is Glycine cleavage system H protein (Burkholderia cenocepacia (strain HI2424)).